The chain runs to 348 residues: NADH-quinone oxidoreductase subunit H (348 aa).

A run of 8 helical transmembrane segments spans residues 7 to 27 (IWLLPLLIIVGKTLLLLVVLL), 82 to 102 (GVFLLAPFVSATLALSTWAVI), 115 to 135 (VGLLYILAISSLEVYGVIMGG), 161 to 181 (IGFVLVTVILVSGSLDLTTIV), 199 to 219 (FLDWNWLVLFPMFIIFFISAL), 251 to 271 (LFFLGEYVAIVLMCALTTILF), 287 to 307 (VPGIIWFVLKVCFVFFWFAMV), and 322 to 342 (LGWKVFLPFSLAMVVITATFL).

The protein belongs to the complex I subunit 1 family. In terms of assembly, NDH-1 is composed of 14 different subunits. Subunits NuoA, H, J, K, L, M, N constitute the membrane sector of the complex.

The protein localises to the cell inner membrane. It carries out the reaction a quinone + NADH + 5 H(+)(in) = a quinol + NAD(+) + 4 H(+)(out). Functionally, NDH-1 shuttles electrons from NADH, via FMN and iron-sulfur (Fe-S) centers, to quinones in the respiratory chain. The immediate electron acceptor for the enzyme in this species is believed to be ubiquinone. Couples the redox reaction to proton translocation (for every two electrons transferred, four hydrogen ions are translocated across the cytoplasmic membrane), and thus conserves the redox energy in a proton gradient. This subunit may bind ubiquinone. The protein is NADH-quinone oxidoreductase subunit H of Bartonella quintana (strain Toulouse) (Rochalimaea quintana).